An 84-amino-acid chain; its full sequence is Phosphoribosylformylglycinamidine synthase subunit PurS (84 aa).

The protein belongs to the PurS family. In terms of assembly, homodimer. Part of the FGAM synthase complex composed of 1 PurL, 1 PurQ and 2 PurS subunits.

Its subcellular location is the cytoplasm. The catalysed reaction is N(2)-formyl-N(1)-(5-phospho-beta-D-ribosyl)glycinamide + L-glutamine + ATP + H2O = 2-formamido-N(1)-(5-O-phospho-beta-D-ribosyl)acetamidine + L-glutamate + ADP + phosphate + H(+). It functions in the pathway purine metabolism; IMP biosynthesis via de novo pathway; 5-amino-1-(5-phospho-D-ribosyl)imidazole from N(2)-formyl-N(1)-(5-phospho-D-ribosyl)glycinamide: step 1/2. In terms of biological role, part of the phosphoribosylformylglycinamidine synthase complex involved in the purines biosynthetic pathway. Catalyzes the ATP-dependent conversion of formylglycinamide ribonucleotide (FGAR) and glutamine to yield formylglycinamidine ribonucleotide (FGAM) and glutamate. The FGAM synthase complex is composed of three subunits. PurQ produces an ammonia molecule by converting glutamine to glutamate. PurL transfers the ammonia molecule to FGAR to form FGAM in an ATP-dependent manner. PurS interacts with PurQ and PurL and is thought to assist in the transfer of the ammonia molecule from PurQ to PurL. This is Phosphoribosylformylglycinamidine synthase subunit PurS from Methanothermobacter thermautotrophicus (strain ATCC 29096 / DSM 1053 / JCM 10044 / NBRC 100330 / Delta H) (Methanobacterium thermoautotrophicum).